Reading from the N-terminus, the 122-residue chain is Large ribosomal subunit protein uL14 (122 aa).

It belongs to the universal ribosomal protein uL14 family. In terms of assembly, part of the 50S ribosomal subunit. Forms a cluster with proteins L3 and L19. In the 70S ribosome, L14 and L19 interact and together make contacts with the 16S rRNA in bridges B5 and B8.

Functionally, binds to 23S rRNA. Forms part of two intersubunit bridges in the 70S ribosome. The protein is Large ribosomal subunit protein uL14 of Brucella abortus (strain 2308).